Here is a 940-residue protein sequence, read N- to C-terminus: Valine--tRNA ligase (940 aa).

The 'HIGH' region signature appears at 47-57 (PNVTGILHMGH). Residues 564 to 568 (KLSKS) carry the 'KMSKS' region motif. Residue lysine 567 coordinates ATP. Residues 873–937 (VEHIAKEKTR…ELQSILDKLA (65 aa)) are a coiled coil.

It belongs to the class-I aminoacyl-tRNA synthetase family. ValS type 1 subfamily. In terms of assembly, monomer.

Its subcellular location is the cytoplasm. The enzyme catalyses tRNA(Val) + L-valine + ATP = L-valyl-tRNA(Val) + AMP + diphosphate. Functionally, catalyzes the attachment of valine to tRNA(Val). As ValRS can inadvertently accommodate and process structurally similar amino acids such as threonine, to avoid such errors, it has a 'posttransfer' editing activity that hydrolyzes mischarged Thr-tRNA(Val) in a tRNA-dependent manner. This is Valine--tRNA ligase from Chlamydia abortus (strain DSM 27085 / S26/3) (Chlamydophila abortus).